A 356-amino-acid polypeptide reads, in one-letter code: MESFVDEVAIEVFAGHGGAGSVHFRREKYVEFGGPDGGDGGIGGNVVIRPNLSMYTLDKYLSKRKFKAQAGFPGVGDNCSGKKGEDLVLFVPLGTQIYDEETGDLLFDFVSDSQEFVVARGGRGGKGNAHFKTSTNQTPRFAQPGEEGEYKFLRLSLKLLADVGIVGLPNAGKSTLISKITDAHPKIAGYAFTTLSPNLGVVKRRGDIFRFTIADIPGIIEGASMGIGLGLSFLRHIERVKGILYLFDASSLDIEEDLKMLRNELSTYNPELLNRPYLIVLNKIDIWNDPEFTKDVIAKVSHLGKVVAISADQEVNLEELLENMDEVFFKNEIEKILNPIKDTKPISLDESDIFES.

The Obg domain occupies 2–160; it reads ESFVDEVAIE…KFLRLSLKLL (159 aa). In terms of domain architecture, OBG-type G spans 161–329; it reads ADVGIVGLPN…LLENMDEVFF (169 aa). GTP-binding positions include 167–174, 192–196, 215–218, 282–285, and 310–312; these read GLPNAGKS, FTTLS, DIPG, NKID, and SAD. Mg(2+) is bound by residues S174 and T194.

The protein belongs to the TRAFAC class OBG-HflX-like GTPase superfamily. OBG GTPase family. Monomer. Mg(2+) is required as a cofactor.

Its subcellular location is the cytoplasm. In terms of biological role, an essential GTPase which binds GTP, GDP and possibly (p)ppGpp with moderate affinity, with high nucleotide exchange rates and a fairly low GTP hydrolysis rate. Plays a role in control of the cell cycle, stress response, ribosome biogenesis and in those bacteria that undergo differentiation, in morphogenesis control. This chain is GTPase Obg, found in Leptospira interrogans serogroup Icterohaemorrhagiae serovar copenhageni (strain Fiocruz L1-130).